The following is a 116-amino-acid chain: Ribosome-binding factor A (116 aa).

This sequence belongs to the RbfA family. In terms of assembly, monomer. Binds 30S ribosomal subunits, but not 50S ribosomal subunits or 70S ribosomes.

It localises to the cytoplasm. In terms of biological role, one of several proteins that assist in the late maturation steps of the functional core of the 30S ribosomal subunit. Associates with free 30S ribosomal subunits (but not with 30S subunits that are part of 70S ribosomes or polysomes). Required for efficient processing of 16S rRNA. May interact with the 5'-terminal helix region of 16S rRNA. The chain is Ribosome-binding factor A from Chlorobium phaeobacteroides (strain BS1).